A 433-amino-acid polypeptide reads, in one-letter code: 23S rRNA (uracil(1939)-C(5))-methyltransferase RlmD (433 aa).

One can recognise a TRAM domain in the interval 10-68 (RTTTRQIITVSVNDLDSFGQGVARHNGKTLFIPGLLPQENAEVTVTEDKKQYARAKVVR). Residues Cys-81, Cys-87, Cys-90, and Cys-162 each coordinate [4Fe-4S] cluster. 6 residues coordinate S-adenosyl-L-methionine: Gln-265, Phe-294, Asn-299, Glu-315, Asn-342, and Asp-363. Catalysis depends on Cys-389, which acts as the Nucleophile.

The protein belongs to the class I-like SAM-binding methyltransferase superfamily. RNA M5U methyltransferase family. RlmD subfamily.

The catalysed reaction is uridine(1939) in 23S rRNA + S-adenosyl-L-methionine = 5-methyluridine(1939) in 23S rRNA + S-adenosyl-L-homocysteine + H(+). Its function is as follows. Catalyzes the formation of 5-methyl-uridine at position 1939 (m5U1939) in 23S rRNA. This Shigella sonnei (strain Ss046) protein is 23S rRNA (uracil(1939)-C(5))-methyltransferase RlmD.